The primary structure comprises 205 residues: Protein-L-isoaspartate O-methyltransferase (205 aa).

Serine 52 is an active-site residue.

It belongs to the methyltransferase superfamily. L-isoaspartyl/D-aspartyl protein methyltransferase family.

Its subcellular location is the cytoplasm. It carries out the reaction [protein]-L-isoaspartate + S-adenosyl-L-methionine = [protein]-L-isoaspartate alpha-methyl ester + S-adenosyl-L-homocysteine. Catalyzes the methyl esterification of L-isoaspartyl residues in peptides and proteins that result from spontaneous decomposition of normal L-aspartyl and L-asparaginyl residues. It plays a role in the repair and/or degradation of damaged proteins. The polypeptide is Protein-L-isoaspartate O-methyltransferase (Gloeobacter violaceus (strain ATCC 29082 / PCC 7421)).